The following is a 726-amino-acid chain: Catalase-peroxidase (726 aa).

The tract at residues 1–33 (MSTTDDTHNTLSTGKCPFHQGGHDRSAGAGTAS) is disordered. Residues 105-226 (WHGAGTYRSI…LGATEMGLIY (122 aa)) constitute a cross-link (tryptophyl-tyrosyl-methioninium (Trp-Tyr) (with M-252)). Residue His106 is the Proton acceptor of the active site. A cross-link (tryptophyl-tyrosyl-methioninium (Tyr-Met) (with W-105)) is located at residues 226-252 (YVNPEGPDHSGEPLSAAAAIRATFGNM). His267 provides a ligand contact to heme b.

It belongs to the peroxidase family. Peroxidase/catalase subfamily. In terms of assembly, homodimer or homotetramer. Heme b is required as a cofactor. Formation of the three residue Trp-Tyr-Met cross-link is important for the catalase, but not the peroxidase activity of the enzyme.

It carries out the reaction H2O2 + AH2 = A + 2 H2O. The enzyme catalyses 2 H2O2 = O2 + 2 H2O. Functionally, bifunctional enzyme with both catalase and broad-spectrum peroxidase activity. This is Catalase-peroxidase from Salmonella paratyphi A (strain ATCC 9150 / SARB42).